The sequence spans 1941 residues: WD repeat-containing protein 81 (1941 aa).

Residues 1 to 27 (MAQGSGGREGALRTPAGGWHSPPSPDM) are disordered. The interval 1–650 (MAQGSGGREG…TPCEASWTRD (650 aa)) is necessary and sufficient for the interaction with SQSTM1. A BEACH domain is found at 337–614 (GQPTGQEELR…IPKLLVQTIQ (278 aa)). Disordered stretches follow at residues 618–637 (GRED…GRPV), 694–718 (VASA…EEGR), 1022–1074 (SKDL…VSFH), 1097–1217 (PQEA…EGKE), 1523–1556 (PSSR…DGHS), and 1569–1602 (QIPN…DNAL). Residues 1137–1146 (LRSGDSSQDL) show a composition bias toward polar residues. Residues 1151 to 1174 (GSEEEEEEEDSCVVLEEEEGEQEE) are compositionally biased toward acidic residues. The segment covering 1586–1595 (SGVGGGGLGS) has biased composition (gly residues). WD repeat units follow at residues 1639-1677 (IRLQ…LWPL), 1686-1724 (ETAP…VWDP), 1729-1769 (TLRT…FVDC), 1777-1815 (EFRL…LLDT), 1819-1856 (LVLR…VWKE), 1860-1896 (KPTH…VCSL), and 1902-1941 (QATT…RLLA).

This sequence belongs to the WD repeat WDR81 family. Interacts with WDR91; involved in early to late endosome cargo transport. Interacts with BECN1; negatively regulates the PI3 kinase/PI3K activity associated with endosomal membranes. Interacts with SQSTM1; the interaction is direct and regulates the interaction of SQSTM1 with ubiquitinated proteins. Interacts with MAP1LC3C; recruits MAP1LC3C to ubiquitinated protein aggregates in the aggrephagy process. In terms of tissue distribution, widely expressed. In the brain, highest levels in cerebellum and corpus callosum.

Its subcellular location is the early endosome membrane. The protein localises to the late endosome membrane. It is found in the lysosome membrane. The protein resides in the cytoplasmic vesicle. It localises to the autophagosome membrane. Its subcellular location is the mitochondrion. The protein localises to the cytoplasm. It is found in the cytosol. In terms of biological role, functions as a negative regulator of the PI3 kinase/PI3K activity associated with endosomal membranes via BECN1, a core subunit of the PI3K complex. By modifying the phosphatidylinositol 3-phosphate/PtdInsP3 content of endosomal membranes may regulate endosome fusion, recycling, sorting and early to late endosome transport. It is for instance, required for the delivery of cargos like BST2/tetherin from early to late endosome and thereby participates indirectly to their degradation by the lysosome. May also play a role in aggrephagy, the macroautophagic degradation of ubiquitinated protein aggregates. In this process, may regulate the interaction of SQSTM1 with ubiquitinated proteins and also recruit MAP1LC3C. May also be involved in maintenance of normal mitochondrial structure and organization. The polypeptide is WD repeat-containing protein 81 (Homo sapiens (Human)).